The primary structure comprises 249 residues: Protein YIPF4 (249 aa).

Over residues 1 to 15 (MQPPGPQQPPPPPLF) the composition is skewed to pro residues. The interval 1 to 40 (MQPPGPQQPPPPPLFTPNNGDFTFVSSADAEDPSGSITTP) is disordered. Over 1 to 116 (MQPPGPQQPP…LGFNRQVVRD (116 aa)) the chain is Cytoplasmic. Over residues 16–26 (TPNNGDFTFVS) the composition is skewed to polar residues. Residues 117-137 (NPDFWGPLAVVLFFSMISLYG) traverse the membrane as a helical segment. A topological domain (lumenal) is located at residue glutamine 138. Residues 139 to 159 (FKVVSWIITIWIFGSLTIFLL) traverse the membrane as a helical segment. At 160–171 (ARVLGGEVAYGQ) the chain is on the cytoplasmic side. The helical transmembrane segment at 172–192 (VLGVIGYSLLPLIVIAPVLLV) threads the bilayer. Residues 193–200 (VGSFEVVS) are Lumenal-facing. The helical transmembrane segment at 201 to 221 (TLIKLFGVFWAAYSAASLLVG) threads the bilayer. The Cytoplasmic segment spans residues 222-228 (EEFKTKK). Residues 229 to 249 (PLLIYPIFLLYIYFLSLYTGV) traverse the membrane as a helical segment.

The protein belongs to the YIP1 family.

The protein localises to the golgi apparatus. The protein resides in the cis-Golgi network membrane. In terms of biological role, involved in the maintenance of the Golgi structure. The protein is Protein YIPF4 (YIPF4) of Gallus gallus (Chicken).